Here is a 167-residue protein sequence, read N- to C-terminus: Photosystem I assembly protein Ycf3 (167 aa).

TPR repeat units lie at residues 35-68, 72-105, and 120-153; these read AFTY…EIDP, SYIL…NPSL, and GEQA…APSN.

The protein belongs to the Ycf3 family.

Its subcellular location is the plastid. It localises to the chloroplast thylakoid membrane. Essential for the assembly of the photosystem I (PSI) complex. May act as a chaperone-like factor to guide the assembly of the PSI subunits. The chain is Photosystem I assembly protein Ycf3 from Marchantia polymorpha (Common liverwort).